A 286-amino-acid polypeptide reads, in one-letter code: Putative thiosulfate sulfurtransferase (286 aa).

Positions 27–134 constitute a Rhodanese 1 domain; the sequence is DDPAYRLVEV…WVDNDYPTTD (108 aa). Glycyl lysine isopeptide (Lys-Gly) (interchain with G-Cter in SAMP2) cross-links involve residues Lys162 and Lys166. One can recognise a Rhodanese 2 domain in the interval 164-283; it reads VDKGLPLVDV…WGNLVGAPVE (120 aa). The active-site Cysteine persulfide intermediate is Cys242. Arg247 is a binding site for substrate.

It carries out the reaction thiosulfate + hydrogen cyanide = thiocyanate + sulfite + 2 H(+). Functionally, may be a sulfotransferase involved in the formation of thiosulfate. In Haloferax volcanii (strain ATCC 29605 / DSM 3757 / JCM 8879 / NBRC 14742 / NCIMB 2012 / VKM B-1768 / DS2) (Halobacterium volcanii), this protein is Putative thiosulfate sulfurtransferase (tssA).